The following is a 260-amino-acid chain: Dehydrogenase/reductase SDR family member 11 (260 aa).

Residues 1–30 form the signal peptide; that stretch reads MTRAGMERWRDRLALVTGASGGIGAAVARA. Residues 18–23, 43–44, E49, 70–71, and N97 each bind NADP(+); these read GASGGI, RT, and DL. Substrate is bound by residues S151 and Y166. NADP(+)-binding positions include Y166, K170, 201 to 204, and K208; that span reads VETQ. Catalysis depends on Y166, which acts as the Proton acceptor.

It belongs to the short-chain dehydrogenases/reductases (SDR) family. As to quaternary structure, homotetramer.

The protein resides in the secreted. It catalyses the reaction a 3beta-hydroxysteroid + NADP(+) = a 3-oxosteroid + NADPH + H(+). The catalysed reaction is 17beta-estradiol + NAD(+) = estrone + NADH + H(+). The enzyme catalyses 17beta-estradiol + NADP(+) = estrone + NADPH + H(+). The protein operates within steroid biosynthesis; estrogen biosynthesis. With respect to regulation, inhibited by flavonoids including apigenin, luteolin, genistein, kaempferol and quercetin and also by carbenoxolone, zearalenone, glycyrrhetinic, curcumin and flufenamic acid. Its function is as follows. Catalyzes the conversion of the 17-keto group of estrone, 4- and 5-androstenes and 5-alpha-androstanes into their 17-beta-hydroxyl metabolites and the conversion of the 3-keto group of 3-, 3,17- and 3,20- diketosteroids into their 3-hydroxyl metabolites. Exhibits reductive 3-beta-hydroxysteroid dehydrogenase activity toward 5-beta-androstanes, 5-beta-pregnanes, 4-pregnenes and bile acids. May also reduce endogenous and exogenous alpha-dicarbonyl compounds and xenobiotic alicyclic ketones. This is Dehydrogenase/reductase SDR family member 11 (Dhrs11) from Mus musculus (Mouse).